Reading from the N-terminus, the 239-residue chain is Carboxy-S-adenosyl-L-methionine synthase (239 aa).

Residues tyrosine 35, 64–66, 88–89, and arginine 195 contribute to the S-adenosyl-L-methionine site; these read GCS and DN.

The protein belongs to the class I-like SAM-binding methyltransferase superfamily. Cx-SAM synthase family. In terms of assembly, homodimer.

It carries out the reaction prephenate + S-adenosyl-L-methionine = carboxy-S-adenosyl-L-methionine + 3-phenylpyruvate + H2O. In terms of biological role, catalyzes the conversion of S-adenosyl-L-methionine (SAM) to carboxy-S-adenosyl-L-methionine (Cx-SAM). This Helicobacter pylori (strain HPAG1) protein is Carboxy-S-adenosyl-L-methionine synthase.